The chain runs to 353 residues: Photosystem II protein D1 (353 aa).

T2 carries the N-acetylthreonine modification. A Phosphothreonine modification is found at T2. The next 3 membrane-spanning stretches (helical) occupy residues 29 to 46 (YIGW…TATS), 118 to 133 (HFLL…EWEL), and 142 to 156 (WIAV…AAAA). Position 118 (H118) interacts with chlorophyll a. Residue Y126 participates in pheophytin a binding. [CaMn4O5] cluster-binding residues include D170 and E189. Residues 197-218 (FHMLGVAGVFGGSLFSAMHGSL) traverse the membrane as a helical segment. H198 contacts chlorophyll a. Residues H215 and 264–265 (SF) each bind a quinone. Position 215 (H215) interacts with Fe cation. H272 is a Fe cation binding site. The chain crosses the membrane as a helical span at residues 274–288 (FLAAWPVVGIWFTAL). H332, E333, D342, and A344 together coordinate [CaMn4O5] cluster. Positions 345–353 (AVEAPSTNG) are excised as a propeptide.

It belongs to the reaction center PufL/M/PsbA/D family. In terms of assembly, PSII is composed of 1 copy each of membrane proteins PsbA, PsbB, PsbC, PsbD, PsbE, PsbF, PsbH, PsbI, PsbJ, PsbK, PsbL, PsbM, PsbT, PsbX, PsbY, PsbZ, Psb30/Ycf12, at least 3 peripheral proteins of the oxygen-evolving complex and a large number of cofactors. It forms dimeric complexes. The D1/D2 heterodimer binds P680, chlorophylls that are the primary electron donor of PSII, and subsequent electron acceptors. It shares a non-heme iron and each subunit binds pheophytin, quinone, additional chlorophylls, carotenoids and lipids. D1 provides most of the ligands for the Mn4-Ca-O5 cluster of the oxygen-evolving complex (OEC). There is also a Cl(-1) ion associated with D1 and D2, which is required for oxygen evolution. The PSII complex binds additional chlorophylls, carotenoids and specific lipids. serves as cofactor. Tyr-161 forms a radical intermediate that is referred to as redox-active TyrZ, YZ or Y-Z. Post-translationally, C-terminally processed by CTPA; processing is essential to allow assembly of the oxygen-evolving complex and thus photosynthetic growth.

It localises to the plastid. The protein resides in the chloroplast thylakoid membrane. The catalysed reaction is 2 a plastoquinone + 4 hnu + 2 H2O = 2 a plastoquinol + O2. Its function is as follows. Photosystem II (PSII) is a light-driven water:plastoquinone oxidoreductase that uses light energy to abstract electrons from H(2)O, generating O(2) and a proton gradient subsequently used for ATP formation. It consists of a core antenna complex that captures photons, and an electron transfer chain that converts photonic excitation into a charge separation. The D1/D2 (PsbA/PsbD) reaction center heterodimer binds P680, the primary electron donor of PSII as well as several subsequent electron acceptors. This Panax ginseng (Korean ginseng) protein is Photosystem II protein D1.